Reading from the N-terminus, the 745-residue chain is Photosystem I P700 chlorophyll a apoprotein A2 (745 aa).

8 helical membrane passes run 49–72, 138–161, 178–202, 276–294, 338–361, 377–403, 425–447, and 528–546; these read LFATHFGHLAIIFLWASGNVFHIA, LYAGAIGLLLLAAVFLFAGWLHLQ, LNHHLAGLFGVSSLAWAGHLVHVAI, MAHHHLAIAVIFIVAGHMY, LHFQLALALACLGVVTSLVAQHMY, AALYTHHQYIAGFLMVGAFAHGAIFLV, AIISHLSWVSLFLGFHTLGLYVH, and FLVHHAIALGLHTTTLILV. Positions 570 and 579 each coordinate [4Fe-4S] cluster. 2 consecutive transmembrane segments (helical) span residues 586–607 and 654–676; these read AFYLAMFWMLNTIGWVTFYWHW and LAVWAWMFLFGHLVWATGFMFLI. Positions 665, 673, and 681 each coordinate chlorophyll a. Trp-682 lines the phylloquinone pocket. The chain crosses the membrane as a helical span at residues 718-738; that stretch reads LVGLAHFTVGYVLTYAAFVIA.

It belongs to the PsaA/PsaB family. As to quaternary structure, the PsaA/B heterodimer binds the P700 chlorophyll special pair and subsequent electron acceptors. PSI consists of a core antenna complex that captures photons, and an electron transfer chain that converts photonic excitation into a charge separation. The cyanobacterial PSI reaction center is composed of one copy each of PsaA,B,C,D,E,F,I,J,K,L,M and X, and forms trimeric complexes. It depends on PSI electron transfer chain: 5 chlorophyll a, 1 chlorophyll a', 2 phylloquinones and 3 4Fe-4S clusters. PSI core antenna: 90 chlorophyll a, 22 carotenoids, 3 phospholipids and 1 galactolipid. P700 is a chlorophyll a/chlorophyll a' dimer, A0 is one or more chlorophyll a, A1 is one or both phylloquinones and FX is a shared 4Fe-4S iron-sulfur center. as a cofactor.

The protein resides in the cellular thylakoid membrane. The enzyme catalyses reduced [plastocyanin] + hnu + oxidized [2Fe-2S]-[ferredoxin] = oxidized [plastocyanin] + reduced [2Fe-2S]-[ferredoxin]. PsaA and PsaB bind P700, the primary electron donor of photosystem I (PSI), as well as the electron acceptors A0, A1 and FX. PSI is a plastocyanin/cytochrome c6-ferredoxin oxidoreductase, converting photonic excitation into a charge separation, which transfers an electron from the donor P700 chlorophyll pair to the spectroscopically characterized acceptors A0, A1, FX, FA and FB in turn. Oxidized P700 is reduced on the lumenal side of the thylakoid membrane by plastocyanin or cytochrome c6. The sequence is that of Photosystem I P700 chlorophyll a apoprotein A2 from Synechococcus sp. (strain JA-3-3Ab) (Cyanobacteria bacterium Yellowstone A-Prime).